The primary structure comprises 209 residues: MSRNGLGPVAGVDEAGRGACCGPISIAACILPDKPIQELAALTDSKNLSASTREKLMPLIKKHALAWSVIVISAQDIDRFGIQHANISGMRRAVAALDTQPGYVLTDAMKVPGFTVPYLPIIGGDASARCIAAASVLAKQTRDDIMTDMANDYPHYGLEIHKGYSTKIHMDAVRHHGASPEHRYSYANVAKAHQEWLHAADNDTTEGGA.

One can recognise an RNase H type-2 domain in the interval 7–198 (GPVAGVDEAG…VAKAHQEWLH (192 aa)). Positions 13, 14, and 107 each coordinate a divalent metal cation.

This sequence belongs to the RNase HII family. Mn(2+) serves as cofactor. Requires Mg(2+) as cofactor.

It localises to the cytoplasm. It catalyses the reaction Endonucleolytic cleavage to 5'-phosphomonoester.. In terms of biological role, endonuclease that specifically degrades the RNA of RNA-DNA hybrids. In Corynebacterium glutamicum (strain R), this protein is Ribonuclease HII.